The primary structure comprises 465 residues: uncharacterized protein (465 aa).

Residues 1 to 50 (MEITDLAAEGNALCRIDDMVMFVPFAAPGDRCTVQVVKKKRNFMQGRIVS) form the TRAM domain. Residues C63, C69, C72, and C168 each contribute to the [4Fe-4S] cluster site. Residues Q293, Y322, E343, and D392 each contribute to the S-adenosyl-L-methionine site. C419 acts as the Nucleophile in catalysis.

Belongs to the class I-like SAM-binding methyltransferase superfamily. RNA M5U methyltransferase family.

This is an uncharacterized protein from Porphyromonas gingivalis (strain ATCC BAA-308 / W83).